The sequence spans 356 residues: Protein-arginine kinase (356 aa).

The Phosphagen kinase C-terminal domain occupies 22 to 249; that stretch reads FRPISTLSLS…SKILSAETEA (228 aa). Residues 25 to 29, 172 to 176, and 202 to 207 each bind ATP; these read ISTLS, VARAF, and SSLLPL.

The protein belongs to the ATP:guanido phosphotransferase family.

The catalysed reaction is L-arginyl-[protein] + ATP = N(omega)-phospho-L-arginyl-[protein] + ADP + H(+). Its function is as follows. Catalyzes the specific phosphorylation of arginine residues in proteins. The protein is Protein-arginine kinase of Chlamydia muridarum (strain MoPn / Nigg).